Reading from the N-terminus, the 155-residue chain is 6,7-dimethyl-8-ribityllumazine synthase (155 aa).

5-amino-6-(D-ribitylamino)uracil is bound by residues F22, 56–58 (AFE), and 80–82 (AVI). 85–86 (ST) is a binding site for (2S)-2-hydroxy-3-oxobutyl phosphate. The active-site Proton donor is H88. 5-amino-6-(D-ribitylamino)uracil is bound at residue F113. R127 provides a ligand contact to (2S)-2-hydroxy-3-oxobutyl phosphate.

It belongs to the DMRL synthase family.

It carries out the reaction (2S)-2-hydroxy-3-oxobutyl phosphate + 5-amino-6-(D-ribitylamino)uracil = 6,7-dimethyl-8-(1-D-ribityl)lumazine + phosphate + 2 H2O + H(+). Its pathway is cofactor biosynthesis; riboflavin biosynthesis; riboflavin from 2-hydroxy-3-oxobutyl phosphate and 5-amino-6-(D-ribitylamino)uracil: step 1/2. Catalyzes the formation of 6,7-dimethyl-8-ribityllumazine by condensation of 5-amino-6-(D-ribitylamino)uracil with 3,4-dihydroxy-2-butanone 4-phosphate. This is the penultimate step in the biosynthesis of riboflavin. The protein is 6,7-dimethyl-8-ribityllumazine synthase of Bifidobacterium longum subsp. infantis (strain ATCC 15697 / DSM 20088 / JCM 1222 / NCTC 11817 / S12).